Reading from the N-terminus, the 271-residue chain is MTESYALFVAFVLGIVEGLTEFLPVSSTGHMIIVGHLLGFDGPKAATFEVVIQMGSILAVVAVFWRRLFGLIGIHFGQKPAQGHATLSLVHIILGMLPAVIIGLAIHSWIKAHLFGPQTVMYALVAGGILLIIAEKFRPAVRSETLDDISYKQALGIGLFQCLALWPGFSRSGATISGGMLMGISRQAAAEFSFILAVPMMVAASGLDLYKSRDLLSMADFPMFAVGFITAFVVAMIAIKTFLALIRRLDFIPFAIYRFVVAFAVYLVFVA.

A run of 8 helical transmembrane segments spans residues 5 to 25, 45 to 65, 86 to 106, 114 to 134, 149 to 169, 189 to 209, 226 to 246, and 251 to 271; these read YALF…FLPV, AATF…AVFW, TLSL…GLAI, LFGP…LIIA, ISYK…WPGF, AAEF…GLDL, VGFI…LALI, and FIPF…VFVA.

The protein belongs to the UppP family.

The protein resides in the cell inner membrane. It catalyses the reaction di-trans,octa-cis-undecaprenyl diphosphate + H2O = di-trans,octa-cis-undecaprenyl phosphate + phosphate + H(+). Functionally, catalyzes the dephosphorylation of undecaprenyl diphosphate (UPP). Confers resistance to bacitracin. The chain is Undecaprenyl-diphosphatase from Aeromonas hydrophila subsp. hydrophila (strain ATCC 7966 / DSM 30187 / BCRC 13018 / CCUG 14551 / JCM 1027 / KCTC 2358 / NCIMB 9240 / NCTC 8049).